The following is a 523-amino-acid chain: Lysine-specific demethylase 4D (523 aa).

In terms of domain architecture, JmjN spans 18 to 60 (IMIFHPTKEEFNDFDKYIAYMESQGAHRAGLAKIIPPKEWKAR). 2 positions are modified to polyADP-ribosyl glutamic acid: glutamate 26 and glutamate 27. Position 136 (tyrosine 136) interacts with 2-oxoglutarate. The 167-residue stretch at 146-312 (DENTKQWNLG…YGKMASQCSC (167 aa)) folds into the JmjC domain. Residues histidine 192 and glutamate 194 each coordinate Fe cation. Residues asparagine 202 and lysine 210 each contribute to the 2-oxoglutarate site. Zn(2+) contacts are provided by cysteine 238 and histidine 244. Lysine 245 contacts 2-oxoglutarate. Position 280 (histidine 280) interacts with Fe cation. 2 residues coordinate Zn(2+): cysteine 310 and cysteine 312. The disordered stretch occupies residues 407-523 (RRSAVSGTAT…ASGCSWAPVP (117 aa)). The span at 428–440 (KPSSTPSSTPGPS) shows a compositional bias: low complexity. Basic residues predominate over residues 448 to 458 (NGRRGRGRPPQ).

This sequence belongs to the JHDM3 histone demethylase family. The cofactor is Fe(2+). Ubiquitinated via 'Lys-63'-linked ubiquitin chains. Deubiquitinated by USP14 with the help of TRIM14 leading to stabilization.

The protein resides in the nucleus. It carries out the reaction N(6),N(6),N(6)-trimethyl-L-lysyl(9)-[histone H3] + 2 2-oxoglutarate + 2 O2 = N(6)-methyl-L-lysyl(9)-[histone H3] + 2 formaldehyde + 2 succinate + 2 CO2. In terms of biological role, histone demethylase that specifically demethylates 'Lys-9' of histone H3, thereby playing a central role in histone code. Does not demethylate histone H3 'Lys-4', H3 'Lys-27', H3 'Lys-36' nor H4 'Lys-20'. Demethylates both di- and trimethylated H3 'Lys-9' residue, while it has no activity on monomethylated residues. Demethylation of Lys residue generates formaldehyde and succinate. The protein is Lysine-specific demethylase 4D (KDM4D) of Homo sapiens (Human).